The sequence spans 618 residues: DNA mismatch repair protein MutL (618 aa).

The span at glutamate 367–glycine 381 shows a compositional bias: low complexity. Positions glutamate 367–glycine 402 are disordered. Residues glycine 382–serine 392 are compositionally biased toward gly residues.

It belongs to the DNA mismatch repair MutL/HexB family.

Functionally, this protein is involved in the repair of mismatches in DNA. It is required for dam-dependent methyl-directed DNA mismatch repair. May act as a 'molecular matchmaker', a protein that promotes the formation of a stable complex between two or more DNA-binding proteins in an ATP-dependent manner without itself being part of a final effector complex. The polypeptide is DNA mismatch repair protein MutL (Salmonella heidelberg (strain SL476)).